The primary structure comprises 500 residues: NAD(P)H-quinone oxidoreductase chain 4, chloroplastic (500 aa).

Transmembrane regions (helical) follow at residues Phe-4–Leu-24, Val-31–Phe-51, Gly-84–Ala-104, Ala-111–Cys-131, Leu-134–Met-154, Phe-167–Leu-187, Ile-212–Thr-232, His-242–Val-262, Ala-272–Ala-292, Ser-308–Leu-328, Gly-330–Gly-350, Leu-386–Thr-406, Leu-411–Ile-431, and Leu-462–Val-482.

This sequence belongs to the complex I subunit 4 family.

The protein resides in the plastid. The protein localises to the chloroplast thylakoid membrane. It catalyses the reaction a plastoquinone + NADH + (n+1) H(+)(in) = a plastoquinol + NAD(+) + n H(+)(out). The catalysed reaction is a plastoquinone + NADPH + (n+1) H(+)(in) = a plastoquinol + NADP(+) + n H(+)(out). This Jasminum nudiflorum (Winter jasmine) protein is NAD(P)H-quinone oxidoreductase chain 4, chloroplastic.